The sequence spans 122 residues: Large ribosomal subunit protein uL14 (122 aa).

This sequence belongs to the universal ribosomal protein uL14 family. In terms of assembly, part of the 50S ribosomal subunit. Forms a cluster with proteins L3 and L19. In the 70S ribosome, L14 and L19 interact and together make contacts with the 16S rRNA in bridges B5 and B8.

Its function is as follows. Binds to 23S rRNA. Forms part of two intersubunit bridges in the 70S ribosome. The sequence is that of Large ribosomal subunit protein uL14 from Erythrobacter litoralis (strain HTCC2594).